Here is a 132-residue protein sequence, read N- to C-terminus: Nickel-responsive regulator (132 aa).

H76, H87, H89, and C95 together coordinate Ni(2+).

It belongs to the transcriptional regulatory CopG/NikR family. In terms of assembly, homotetramer. Ni(2+) serves as cofactor.

Functionally, transcriptional repressor of the nikABCDE operon. Is active in the presence of excessive concentrations of intracellular nickel. The protein is Nickel-responsive regulator of Klebsiella pneumoniae (strain 342).